The sequence spans 371 residues: Alanine dehydrogenase (371 aa).

Positions 15 and 75 each coordinate substrate. H96 serves as the catalytic Proton donor/acceptor. NAD(+) contacts are provided by residues S134, 178–179 (TA), D198, K203, S220, 239–240 (VL), 267–270 (IAID), R279, and 298–301 (VANM). The active-site Proton donor/acceptor is the D270. Residues E323 and H327 each coordinate Mg(2+).

This sequence belongs to the AlaDH/PNT family. In terms of assembly, homohexamer. Trimer of dimers. It depends on Mg(2+) as a cofactor.

It is found in the secreted. The catalysed reaction is L-alanine + NAD(+) + H2O = pyruvate + NH4(+) + NADH + H(+). It participates in amino-acid degradation; L-alanine degradation via dehydrogenase pathway; NH(3) and pyruvate from L-alanine: step 1/1. In terms of biological role, catalyzes the reversible reductive amination of pyruvate to L-alanine. However, since the physiological environment of M.tuberculosis has a neutral pH, it can be assumed that the enzyme catalyzes exclusively the formation of L-alanine. May play a role in cell wall synthesis as L-alanine is an important constituent of the peptidoglycan layer. This chain is Alanine dehydrogenase (ald), found in Mycobacterium tuberculosis (strain CDC 1551 / Oshkosh).